A 346-amino-acid chain; its full sequence is Uroporphyrinogen decarboxylase (346 aa).

Substrate-binding positions include 21-25 (RQAGR), Asp-71, Tyr-146, Ser-201, and His-316.

It belongs to the uroporphyrinogen decarboxylase family. As to quaternary structure, homodimer.

The protein resides in the cytoplasm. It catalyses the reaction uroporphyrinogen III + 4 H(+) = coproporphyrinogen III + 4 CO2. It participates in porphyrin-containing compound metabolism; protoporphyrin-IX biosynthesis; coproporphyrinogen-III from 5-aminolevulinate: step 4/4. In terms of biological role, catalyzes the decarboxylation of four acetate groups of uroporphyrinogen-III to yield coproporphyrinogen-III. The polypeptide is Uroporphyrinogen decarboxylase (Rickettsia rickettsii (strain Iowa)).